The chain runs to 216 residues: Cytochrome c oxidase subunit 2 (216 aa).

Topologically, residues Leu1–Ser8 are mitochondrial intermembrane. The chain crosses the membrane as a helical span at residues Pro9 to Met39. Over Leu40–Gln53 the chain is Mitochondrial matrix. A helical transmembrane segment spans residues Glu54–Thr81. Residues Asp82–Trp216 are Mitochondrial intermembrane-facing. Residues His155, Cys190, Glu192, Cys194, His198, and Met201 each coordinate Cu cation. Glu192 serves as a coordination point for Mg(2+).

Belongs to the cytochrome c oxidase subunit 2 family. In terms of assembly, component of the cytochrome c oxidase (complex IV, CIV), a multisubunit enzyme composed of 14 subunits. The complex is composed of a catalytic core of 3 subunits MT-CO1, MT-CO2 and MT-CO3, encoded in the mitochondrial DNA, and 11 supernumerary subunits COX4I, COX5A, COX5B, COX6A, COX6B, COX6C, COX7A, COX7B, COX7C, COX8 and NDUFA4, which are encoded in the nuclear genome. The complex exists as a monomer or a dimer and forms supercomplexes (SCs) in the inner mitochondrial membrane with NADH-ubiquinone oxidoreductase (complex I, CI) and ubiquinol-cytochrome c oxidoreductase (cytochrome b-c1 complex, complex III, CIII), resulting in different assemblies (supercomplex SCI(1)III(2)IV(1) and megacomplex MCI(2)III(2)IV(2)). Found in a complex with TMEM177, COA6, COX18, COX20, SCO1 and SCO2. Interacts with TMEM177 in a COX20-dependent manner. Interacts with COX20. Interacts with COX16. Requires Cu cation as cofactor.

It is found in the mitochondrion inner membrane. It carries out the reaction 4 Fe(II)-[cytochrome c] + O2 + 8 H(+)(in) = 4 Fe(III)-[cytochrome c] + 2 H2O + 4 H(+)(out). Component of the cytochrome c oxidase, the last enzyme in the mitochondrial electron transport chain which drives oxidative phosphorylation. The respiratory chain contains 3 multisubunit complexes succinate dehydrogenase (complex II, CII), ubiquinol-cytochrome c oxidoreductase (cytochrome b-c1 complex, complex III, CIII) and cytochrome c oxidase (complex IV, CIV), that cooperate to transfer electrons derived from NADH and succinate to molecular oxygen, creating an electrochemical gradient over the inner membrane that drives transmembrane transport and the ATP synthase. Cytochrome c oxidase is the component of the respiratory chain that catalyzes the reduction of oxygen to water. Electrons originating from reduced cytochrome c in the intermembrane space (IMS) are transferred via the dinuclear copper A center (CU(A)) of subunit 2 and heme A of subunit 1 to the active site in subunit 1, a binuclear center (BNC) formed by heme A3 and copper B (CU(B)). The BNC reduces molecular oxygen to 2 water molecules using 4 electrons from cytochrome c in the IMS and 4 protons from the mitochondrial matrix. The protein is Cytochrome c oxidase subunit 2 (MT-CO2) of Callimico goeldii (Goeldi's marmoset).